The primary structure comprises 637 residues: DNA mismatch repair protein MutL (637 aa).

Polar residues predominate over residues 353–371 (GQGQRPVSSASMPSASRQA). Residues 353–444 (GQGQRPVSSA…SEAASETPHD (92 aa)) are disordered. Over residues 378–389 (DWIKEGVQDWDW) the composition is skewed to basic and acidic residues. Positions 396–406 (PQNPPQNPPPG) are enriched in pro residues. Residues 430 to 444 (SGKELSEAASETPHD) show a composition bias toward basic and acidic residues.

It belongs to the DNA mismatch repair MutL/HexB family.

Its function is as follows. This protein is involved in the repair of mismatches in DNA. It is required for dam-dependent methyl-directed DNA mismatch repair. May act as a 'molecular matchmaker', a protein that promotes the formation of a stable complex between two or more DNA-binding proteins in an ATP-dependent manner without itself being part of a final effector complex. This chain is DNA mismatch repair protein MutL, found in Beijerinckia indica subsp. indica (strain ATCC 9039 / DSM 1715 / NCIMB 8712).